A 689-amino-acid polypeptide reads, in one-letter code: Translation initiation factor IF-2 (689 aa).

The tract at residues 70 to 107 is disordered; the sequence is VRSKKNSNKKKKKGKGNQDKRQENFAGKQQAQTVETPD. A compositionally biased stretch (basic residues) spans 71–84; sequence RSKKNSNKKKKKGK. One can recognise a tr-type G domain in the interval 191–360; the sequence is ERPAVVTIMG…LLVSEVEEYK (170 aa). The tract at residues 200–207 is G1; sequence GHVDHGKT. Position 200 to 207 (200 to 207) interacts with GTP; it reads GHVDHGKT. A G2 region spans residues 225 to 229; it reads GITQH. Residues 246-249 are G3; it reads DTPG. GTP is bound by residues 246-250 and 300-303; these read DTPGH and NKMD. A G4 region spans residues 300-303; sequence NKMD. The interval 336–338 is G5; the sequence is SAI.

It belongs to the TRAFAC class translation factor GTPase superfamily. Classic translation factor GTPase family. IF-2 subfamily.

It localises to the cytoplasm. One of the essential components for the initiation of protein synthesis. Protects formylmethionyl-tRNA from spontaneous hydrolysis and promotes its binding to the 30S ribosomal subunits. Also involved in the hydrolysis of GTP during the formation of the 70S ribosomal complex. This Bacillus cytotoxicus (strain DSM 22905 / CIP 110041 / 391-98 / NVH 391-98) protein is Translation initiation factor IF-2.